The primary structure comprises 104 residues: Increased recombination centers protein 13 (104 aa).

Residues 63–83 (LVHLFSYVFFLFLLKICVDVL) traverse the membrane as a helical segment.

Its subcellular location is the membrane. Functionally, may be involved in a pathway contributing to genomic integrity. This chain is Increased recombination centers protein 13 (IRC13), found in Saccharomyces cerevisiae (strain ATCC 204508 / S288c) (Baker's yeast).